Here is a 299-residue protein sequence, read N- to C-terminus: Ankyrin repeat domain-containing protein 54 (299 aa).

Positions 1–27 (MAATGGGAEDESRSGRSSSEGECAVAP) are disordered. At Ala2 the chain carries N-acetylalanine. Residue Ser62 is modified to Phosphoserine. The short motif at 98–116 (RRLGPTGKEVHALKRLRDS) is the Nuclear localization signal (NLS) element. ANK repeat units follow at residues 108-137 (HALK…DPCA), 141-170 (KGRT…DPNQ), 174-203 (LGNT…RVDA), and 207-239 (AGRT…EVKQ). The LYN-binding stretch occupies residues 140-240 (DKGRTALHFA…EAVRLEVKQI (101 aa)). The short motif at 282–292 (LLASFTSLSLQ) is the Nuclear export signal (NES) element.

Interacts (via ankyrin repeat region) with LYN (via SH3-domain) in an activation-independent status of LYN. Forms a multiprotein complex with LYN and HCLS1. Interacts with TSN2, VAV1, DBNL and LASP1.

The protein localises to the nucleus. The protein resides in the cytoplasm. It localises to the midbody. Its function is as follows. Plays an important role in regulating intracellular signaling events associated with erythroid terminal differentiation. This is Ankyrin repeat domain-containing protein 54 (Ankrd54) from Rattus norvegicus (Rat).